A 349-amino-acid chain; its full sequence is tRNA pseudouridine synthase D (349 aa).

Phe26 contributes to the substrate binding site. Catalysis depends on Asp79, which acts as the Nucleophile. Asn128 provides a ligand contact to substrate. Residues 154 to 302 (GVPNYFGSQR…VEGSRRAVLL (149 aa)) enclose the TRUD domain. A substrate-binding site is contributed by Phe328.

Belongs to the pseudouridine synthase TruD family.

It carries out the reaction uridine(13) in tRNA = pseudouridine(13) in tRNA. Its function is as follows. Responsible for synthesis of pseudouridine from uracil-13 in transfer RNAs. The polypeptide is tRNA pseudouridine synthase D (Yersinia pseudotuberculosis serotype O:1b (strain IP 31758)).